A 312-amino-acid polypeptide reads, in one-letter code: Malate dehydrogenase (312 aa).

NAD(+) contacts are provided by residues 7–13 (GAAGGIG) and aspartate 34. Substrate is bound by residues arginine 81 and arginine 87. Residues asparagine 94 and 117 to 119 (ITN) contribute to the NAD(+) site. Substrate-binding residues include asparagine 119 and arginine 153. Catalysis depends on histidine 177, which acts as the Proton acceptor. Residue methionine 227 participates in NAD(+) binding.

It belongs to the LDH/MDH superfamily. MDH type 1 family. As to quaternary structure, homodimer.

It carries out the reaction (S)-malate + NAD(+) = oxaloacetate + NADH + H(+). In terms of biological role, catalyzes the reversible oxidation of malate to oxaloacetate. In Escherichia fergusonii (strain ATCC 35469 / DSM 13698 / CCUG 18766 / IAM 14443 / JCM 21226 / LMG 7866 / NBRC 102419 / NCTC 12128 / CDC 0568-73), this protein is Malate dehydrogenase.